Reading from the N-terminus, the 264-residue chain is Phosphonoacetaldehyde hydrolase (264 aa).

The active-site Nucleophile is Asp-9. Mg(2+) contacts are provided by Asp-9 and Ala-11. The Schiff-base intermediate with substrate role is filled by Lys-50. Asp-183 contributes to the Mg(2+) binding site.

The protein belongs to the HAD-like hydrolase superfamily. PhnX family. In terms of assembly, homodimer. Mg(2+) is required as a cofactor.

It carries out the reaction phosphonoacetaldehyde + H2O = acetaldehyde + phosphate + H(+). Functionally, involved in phosphonate degradation. The chain is Phosphonoacetaldehyde hydrolase from Bacillus mycoides (strain KBAB4) (Bacillus weihenstephanensis).